A 107-amino-acid chain; its full sequence is MAREDVGAPPDHLWVHQEGVYRDEYQRTWVAVVEEETSFLKARVQQVQVPLGDATKPSHLLTSQLPLMWQLYPEERYMDNNSRLWQIQHHLMVRGVQELLLKLLPDD.

The protein belongs to the TCL1 family. As to quaternary structure, interacts with AKT1 and AKT2 (via PH domain). Does not interact with AKT3. Not found at a significant level in any tissue.

In terms of biological role, enhances the phosphorylation and activation of AKT1 and AKT2. This chain is Protein p13 MTCP-1 (Mtcp1), found in Mus musculus (Mouse).